Consider the following 315-residue polypeptide: Methionyl-tRNA formyltransferase (315 aa).

113 to 116 lines the (6S)-5,6,7,8-tetrahydrofolate pocket; sequence SILP.

It belongs to the Fmt family.

The catalysed reaction is L-methionyl-tRNA(fMet) + (6R)-10-formyltetrahydrofolate = N-formyl-L-methionyl-tRNA(fMet) + (6S)-5,6,7,8-tetrahydrofolate + H(+). In terms of biological role, attaches a formyl group to the free amino group of methionyl-tRNA(fMet). The formyl group appears to play a dual role in the initiator identity of N-formylmethionyl-tRNA by promoting its recognition by IF2 and preventing the misappropriation of this tRNA by the elongation apparatus. The sequence is that of Methionyl-tRNA formyltransferase from Vibrio vulnificus (strain CMCP6).